The chain runs to 92 residues: Small ribosomal subunit protein uS19c (92 aa).

Belongs to the universal ribosomal protein uS19 family.

It localises to the plastid. The protein localises to the chloroplast. In terms of biological role, protein S19 forms a complex with S13 that binds strongly to the 16S ribosomal RNA. This Phalaenopsis aphrodite subsp. formosana (Moth orchid) protein is Small ribosomal subunit protein uS19c.